The sequence spans 238 residues: MKVFDVHKFDMKKEQDFLQVQFNLKNRINLSPTIHPDSINTCAGVDLAYWEQDGEPYGVCCIIVIDADTKEVIEKVHSMGRISVPYVSGFLAFRELPLIIEAAKKLETEPDVFLFDGNGYLHYNHMGVATHAAFFLGKPTIGIAKTYLKIKGCDFVTPEIEVGAYTDIIIDGEVYGRALRTRRDVKPIFLSCGNYIDLDSSYQITMSLINQESRLPIPVRLADLETHVLRTFYQKNHV.

Positions 46 and 116 each coordinate Mg(2+).

It belongs to the endonuclease V family. The cofactor is Mg(2+).

It is found in the cytoplasm. The catalysed reaction is Endonucleolytic cleavage at apurinic or apyrimidinic sites to products with a 5'-phosphate.. DNA repair enzyme involved in the repair of deaminated bases. Selectively cleaves double-stranded DNA at the second phosphodiester bond 3' to a deoxyinosine leaving behind the intact lesion on the nicked DNA. The protein is Endonuclease V of Bacillus subtilis (strain 168).